The primary structure comprises 228 residues: Urease accessory protein UreF (228 aa).

The protein belongs to the UreF family. In terms of assembly, ureD, UreF and UreG form a complex that acts as a GTP-hydrolysis-dependent molecular chaperone, activating the urease apoprotein by helping to assemble the nickel containing metallocenter of UreC. The UreE protein probably delivers the nickel.

The protein localises to the cytoplasm. Its function is as follows. Required for maturation of urease via the functional incorporation of the urease nickel metallocenter. The polypeptide is Urease accessory protein UreF (Yersinia pestis bv. Antiqua (strain Antiqua)).